A 972-amino-acid polypeptide reads, in one-letter code: DNA topoisomerase 1 (972 aa).

Disordered regions lie at residues 1–210 (MSGD…VFVK) and 300–416 (HEQS…RQKA). The segment covering 11–31 (IHIQNGGSCEVVQSNGVTTNG) has biased composition (polar residues). Residues 32–50 (HGHHHHHHSSSSSSSKHKS) show a composition bias toward basic residues. Composition is skewed to basic and acidic residues over residues 51-65 (SSKD…EHKS), 72-86 (SKEH…DRHK), and 93-103 (KHRDKDKERDG). The span at 104-114 (SSNSHRSGSSS) shows a compositional bias: low complexity. Basic residues predominate over residues 125–138 (SKHKSSSGHHKRSS). A compositionally biased stretch (basic and acidic residues) spans 139-151 (KDKERRDKDKDRG). Over residues 173-183 (SHKSSSSSSSS) the composition is skewed to low complexity. Phosphoserine is present on S303. Y304 carries the phosphotyrosine modification. The span at 316-330 (HDDDADEMNDDEEDV) shows a compositional bias: acidic residues. 3 interaction with DNA regions span residues 648-649 (KY), 711-716 (RAGNEK), and 807-809 (TAK). In terms of domain architecture, Topo IB-type catalytic spans 655 to 972 (SSKLKGEKDH…VHMADENYRF (318 aa)). The active-site O-(3'-phospho-DNA)-tyrosine intermediate is the Y930.

This sequence belongs to the type IB topoisomerase family. Interacts with Topors.

It localises to the nucleus. Its subcellular location is the cytoplasm. The catalysed reaction is ATP-independent breakage of single-stranded DNA, followed by passage and rejoining.. In terms of biological role, releases the supercoiling and torsional tension of DNA introduced during the DNA replication and transcription by transiently cleaving and rejoining one strand of the DNA duplex. Introduces a single-strand break via transesterification at a target site in duplex DNA. The scissile phosphodiester is attacked by the catalytic tyrosine of the enzyme, resulting in the formation of a DNA-(3'-phosphotyrosyl)-enzyme intermediate and the expulsion of a 5'-OH DNA strand. The free DNA strand then undergoes passage around the unbroken strand thus removing DNA supercoils. Finally, in the religation step, the DNA 5'-OH attacks the covalent intermediate to expel the active-site tyrosine and restore the DNA phosphodiester backbone. The protein is DNA topoisomerase 1 of Drosophila melanogaster (Fruit fly).